The following is a 180-amino-acid chain: Translation initiation factor IF-3 (180 aa).

It belongs to the IF-3 family. As to quaternary structure, monomer.

The protein localises to the cytoplasm. In terms of biological role, IF-3 binds to the 30S ribosomal subunit and shifts the equilibrium between 70S ribosomes and their 50S and 30S subunits in favor of the free subunits, thus enhancing the availability of 30S subunits on which protein synthesis initiation begins. The protein is Translation initiation factor IF-3 of Klebsiella pneumoniae.